The following is a 310-amino-acid chain: Uridine phosphorylase 1 (310 aa).

Phosphate is bound by residues G60, R94, and 138 to 141; that span reads RIGT. Uridine is bound by residues 142–143 and 217–219; these read SG and QGR.

The protein belongs to the PNP/UDP phosphorylase family. Homodimer.

It catalyses the reaction uridine + phosphate = alpha-D-ribose 1-phosphate + uracil. It carries out the reaction 2'-deoxyuridine + phosphate = 2-deoxy-alpha-D-ribose 1-phosphate + uracil. It participates in pyrimidine metabolism; UMP biosynthesis via salvage pathway; uracil from uridine (phosphorylase route): step 1/1. Functionally, catalyzes the reversible phosphorylytic cleavage of uridine to uracil and ribose-1-phosphate which can then be utilized as carbon and energy sources or in the rescue of pyrimidine bases for nucleotide synthesis. Shows broad substrate specificity and can also accept deoxyuridine and other analogous compounds. This is Uridine phosphorylase 1 from Homo sapiens (Human).